We begin with the raw amino-acid sequence, 496 residues long: NADP-dependent glyceraldehyde-3-phosphate dehydrogenase (496 aa).

Substrate contacts are provided by residues Arg-116 and 169–170 (NY). Lys-192, Thr-195, and Asp-230 together coordinate NADP(+). An NAD(+)-binding site is contributed by 245 to 249 (GGDTG). The active-site Proton acceptor is the Glu-264. 297 to 299 (RCT) lines the substrate pocket. Cys-298 functions as the Nucleophile in the catalytic mechanism. Glu-391 is a binding site for NADP(+). Residue Arg-451 participates in substrate binding.

It belongs to the aldehyde dehydrogenase family.

It localises to the cytoplasm. It catalyses the reaction D-glyceraldehyde 3-phosphate + NADP(+) + H2O = (2R)-3-phosphoglycerate + NADPH + 2 H(+). Important as a means of generating NADPH for biosynthetic reactions. The sequence is that of NADP-dependent glyceraldehyde-3-phosphate dehydrogenase (GAPN) from Nicotiana plumbaginifolia (Leadwort-leaved tobacco).